We begin with the raw amino-acid sequence, 193 residues long: Cysteine and glycine-rich protein 1 (193 aa).

Positions 10–61 (CGVCQKTVYFAEEVQCEGNSFHKSCFLCMVCKKNLDSTTVAVHGEEIYCKSC) constitute an LIM zinc-binding 1 domain. The short motif at 64-69 (KKYGPK) is the Nuclear localization signal element. At Ser-81 the chain carries Phosphoserine. An N6-acetyllysine modification is found at Lys-84. Lys-91 participates in a covalent cross-link: Glycyl lysine isopeptide (Lys-Gly) (interchain with G-Cter in SUMO2). N6-acetyllysine is present on residues Lys-112, Lys-131, Lys-137, and Lys-161. In terms of domain architecture, LIM zinc-binding 2 spans 119 to 170 (CPRCSQAVYAAEKVIGAGKSWHKSCFRCAKCGKGLESTTLADKDGEIYCKGC). At Ser-192 the chain carries Phosphoserine.

In terms of assembly, interacts with ASCC1; ASCC2 and TRIP4.

The protein resides in the nucleus. Its function is as follows. Could play a role in neuronal development. In Mus musculus (Mouse), this protein is Cysteine and glycine-rich protein 1 (Csrp1).